The sequence spans 152 residues: 3-dehydroquinate dehydratase (152 aa).

Residue Tyr-26 is the Proton acceptor of the active site. Residues Asn-78, His-84, and Asp-91 each coordinate substrate. The Proton donor role is filled by His-104. Substrate contacts are provided by residues 105–106 and Arg-115; that span reads IS.

It belongs to the type-II 3-dehydroquinase family. In terms of assembly, homododecamer.

The catalysed reaction is 3-dehydroquinate = 3-dehydroshikimate + H2O. Its pathway is metabolic intermediate biosynthesis; chorismate biosynthesis; chorismate from D-erythrose 4-phosphate and phosphoenolpyruvate: step 3/7. Catalyzes a trans-dehydration via an enolate intermediate. The sequence is that of 3-dehydroquinate dehydratase from Buchnera aphidicola subsp. Cinara cedri (strain Cc).